The sequence spans 500 residues: MDAALALLFGQVATAVLPYVVNSIGRVPRPKRVDVKKAMGEAHQCRPVVPYRAPRPYTEGRVKALFIGINYTGSSAQLGGCVNDVMHMLQTLQRIEFPISECCILVDDRRFPNFTAMPTRENIIKYMAWLVYDVRPGDVLFFHFSGHGAETKGGRDSNEKMDQCLVPLDYDKAGAILDDDLFELMIKGLPAGVRMTAVFDCCHSASLLDLPFAFVAGRNVSSNQRHEMRMVRKDNYSRGDVVMFSGCEDSGTSADVTNTSSFGNGTVAAGGAATQAFTWALLNTTGYSYIDIFMKTREVLRQKGYKQVPQLSSSKPVDLYKQFSLFGPLTMNASLVQHLPQEYVQPWAPHPAYQQPHEATLPASVSQPHSQPVMGIPVASTSNGKSNPGVSDGGRASGEVYPPTQYPSSHPAPQQQAYYQPPQQAYYQPPQQAYYQPPQQAYYQPPQQAYYQPPQQAYYQPEPHHQPAPPPPPKKENKPARPGYPMSYCMKFSQGKPGRK.

An N-terminal signal peptide occupies residues 1–18; sequence MDAALALLFGQVATAVLP. Positions 19-63 are important for catalytic activity; that stretch reads YVVNSIGRVPRPKRVDVKKAMGEAHQCRPVVPYRAPRPYTEGRVK. Residues Asn70 and Asn113 are each glycosylated (N-linked (GlcNAc...) asparagine). Residue His147 is part of the active site. Asp162, Asp178, and Asp179 together coordinate Ca(2+). Cys202 is an active-site residue. Position 209 (Asp209) interacts with Ca(2+). Asn219, Asn235, Asn258, Asn264, Asn283, and Asn332 each carry an N-linked (GlcNAc...) asparagine glycan. Disordered stretches follow at residues 358–419 and 444–500; these read EATL…QAYY and QPPQ…PGRK. The segment covering 379–389 has biased composition (polar residues); that stretch reads ASTSNGKSNPG. A compositionally biased stretch (low complexity) spans 444-461; the sequence is QPPQQAYYQPPQQAYYQP.

Belongs to the peptidase C14B family.

It is found in the recycling endosome. In terms of biological role, cysteine protease that cleaves specifically after arginine or lysine residues. This is Metacaspase-5 from Trypanosoma brucei brucei.